The chain runs to 396 residues: Probable tRNA sulfurtransferase (396 aa).

The region spanning 63-166 (AAAARASARV…GRRAYFFDTI (104 aa)) is the THUMP domain. Residues 184-185 (LY), arginine 266, glycine 288, and glutamine 297 each bind ATP.

The protein belongs to the ThiI family.

It localises to the cytoplasm. It carries out the reaction [ThiI sulfur-carrier protein]-S-sulfanyl-L-cysteine + a uridine in tRNA + 2 reduced [2Fe-2S]-[ferredoxin] + ATP + H(+) = [ThiI sulfur-carrier protein]-L-cysteine + a 4-thiouridine in tRNA + 2 oxidized [2Fe-2S]-[ferredoxin] + AMP + diphosphate. The catalysed reaction is [ThiS sulfur-carrier protein]-C-terminal Gly-Gly-AMP + S-sulfanyl-L-cysteinyl-[cysteine desulfurase] + AH2 = [ThiS sulfur-carrier protein]-C-terminal-Gly-aminoethanethioate + L-cysteinyl-[cysteine desulfurase] + A + AMP + 2 H(+). It participates in cofactor biosynthesis; thiamine diphosphate biosynthesis. Functionally, catalyzes the ATP-dependent transfer of a sulfur to tRNA to produce 4-thiouridine in position 8 of tRNAs, which functions as a near-UV photosensor. Also catalyzes the transfer of sulfur to the sulfur carrier protein ThiS, forming ThiS-thiocarboxylate. This is a step in the synthesis of thiazole, in the thiamine biosynthesis pathway. The sulfur is donated as persulfide by IscS. The protein is Probable tRNA sulfurtransferase of Aeropyrum pernix (strain ATCC 700893 / DSM 11879 / JCM 9820 / NBRC 100138 / K1).